The primary structure comprises 83 residues: Bowman-Birk type seed trypsin and chymotrypsin inhibitor (83 aa).

Disulfide bonds link Cys-18–Cys-72, Cys-19–Cys-34, Cys-22–Cys-68, Cys-24–Cys-32, Cys-42–Cys-49, Cys-46–Cys-61, and Cys-51–Cys-59.

It belongs to the Bowman-Birk serine protease inhibitor family.

The sequence is that of Bowman-Birk type seed trypsin and chymotrypsin inhibitor from Vigna unguiculata (Cowpea).